The chain runs to 172 residues: S-ribosylhomocysteine lyase (172 aa).

Positions 54, 58, and 128 each coordinate Fe cation.

It belongs to the LuxS family. In terms of assembly, homodimer. It depends on Fe cation as a cofactor.

The enzyme catalyses S-(5-deoxy-D-ribos-5-yl)-L-homocysteine = (S)-4,5-dihydroxypentane-2,3-dione + L-homocysteine. Its function is as follows. Involved in the synthesis of autoinducer 2 (AI-2) which is secreted by bacteria and is used to communicate both the cell density and the metabolic potential of the environment. The regulation of gene expression in response to changes in cell density is called quorum sensing. Catalyzes the transformation of S-ribosylhomocysteine (RHC) to homocysteine (HC) and 4,5-dihydroxy-2,3-pentadione (DPD). This is S-ribosylhomocysteine lyase from Vibrio alginolyticus.